We begin with the raw amino-acid sequence, 420 residues long: C-methyltransferase NovU (420 aa).

It belongs to the methyltransferase superfamily.

The protein operates within antibiotic biosynthesis; novobiocin biosynthesis. Functionally, C-methyltransferase that acts together with NovW to catalyze the formation of dTDP-4-keto-6-deoxy-5-C-methyl-L-lyxo-hexose from dTDP-4-keto-6-deoxy-D-glucose in the novobiocin biosynthesis pathway, an aminocoumarin family antibiotic that targets bacterial DNA gyrases. This chain is C-methyltransferase NovU (novU), found in Streptomyces niveus (Streptomyces spheroides).